The following is a 460-amino-acid chain: Bifunctional protein GlmU (460 aa).

Residues 1–229 (MTNYAIILAA…FNESLGVNDR (229 aa)) are pyrophosphorylase. Residues 8–11 (LAAG), lysine 22, glutamine 72, and 77–78 (GT) each bind UDP-N-acetyl-alpha-D-glucosamine. Aspartate 102 serves as a coordination point for Mg(2+). UDP-N-acetyl-alpha-D-glucosamine-binding residues include glycine 139, glutamate 154, asparagine 169, and asparagine 227. Mg(2+) is bound at residue asparagine 227. Residues 230-250 (VALATAETVMRQRITQKHMVN) are linker. The N-acetyltransferase stretch occupies residues 251-460 (GVTFQNPETV…RLAHHPSRSK (210 aa)). Residues arginine 332 and lysine 350 each coordinate UDP-N-acetyl-alpha-D-glucosamine. Histidine 362 functions as the Proton acceptor in the catalytic mechanism. UDP-N-acetyl-alpha-D-glucosamine-binding residues include tyrosine 365 and asparagine 376. Acetyl-CoA contacts are provided by residues alanine 379, 385-386 (NY), serine 404, alanine 422, and arginine 439.

The protein in the N-terminal section; belongs to the N-acetylglucosamine-1-phosphate uridyltransferase family. In the C-terminal section; belongs to the transferase hexapeptide repeat family. In terms of assembly, homotrimer. Mg(2+) is required as a cofactor.

Its subcellular location is the cytoplasm. It carries out the reaction alpha-D-glucosamine 1-phosphate + acetyl-CoA = N-acetyl-alpha-D-glucosamine 1-phosphate + CoA + H(+). The enzyme catalyses N-acetyl-alpha-D-glucosamine 1-phosphate + UTP + H(+) = UDP-N-acetyl-alpha-D-glucosamine + diphosphate. The protein operates within nucleotide-sugar biosynthesis; UDP-N-acetyl-alpha-D-glucosamine biosynthesis; N-acetyl-alpha-D-glucosamine 1-phosphate from alpha-D-glucosamine 6-phosphate (route II): step 2/2. It participates in nucleotide-sugar biosynthesis; UDP-N-acetyl-alpha-D-glucosamine biosynthesis; UDP-N-acetyl-alpha-D-glucosamine from N-acetyl-alpha-D-glucosamine 1-phosphate: step 1/1. Its pathway is bacterial outer membrane biogenesis; LPS lipid A biosynthesis. Catalyzes the last two sequential reactions in the de novo biosynthetic pathway for UDP-N-acetylglucosamine (UDP-GlcNAc). The C-terminal domain catalyzes the transfer of acetyl group from acetyl coenzyme A to glucosamine-1-phosphate (GlcN-1-P) to produce N-acetylglucosamine-1-phosphate (GlcNAc-1-P), which is converted into UDP-GlcNAc by the transfer of uridine 5-monophosphate (from uridine 5-triphosphate), a reaction catalyzed by the N-terminal domain. This is Bifunctional protein GlmU from Streptococcus pyogenes serotype M12 (strain MGAS9429).